Here is a 439-residue protein sequence, read N- to C-terminus: Prenyltransferase iacE (439 aa).

Substrate is bound by residues 88–89 (WI), Glu-97, Arg-112, Lys-198, Tyr-200, Arg-271, Lys-273, and Tyr-275.

The protein belongs to the tryptophan dimethylallyltransferase family.

The catalysed reaction is siccayne + dimethylallyl diphosphate = pestalodiol + diphosphate. It participates in secondary metabolite biosynthesis. Functionally, prenyltransferase; part of the gene cluster that mediates the biosynthesis of iso-A82775C, a enylepoxycyclohexane and biosynthetic precursor of the chloropestolide anticancer natural products. Within the cluster, the prenyltransferase iacE prenylates siccayne to generate pestalodiol E, using dimethylallyl diphosphate (DMAPP) as cosubstrate. The probable oxidoreductase iacF is then involved in the epoxidation of pestalodiol F to pestalodiol F, which is further converted to pestalofone A by the short-chain dehydrogenase/reductase iacG. Iso-A82775C is subsequently generated from pestalofone A by the short-chain dehydrogenase/reductase iacC. Iso-A82775C is further condensed with maldoxin via a Diels-Alder reaction to produce the anticancer natural products chloropestolides A to E. This Pestalotiopsis fici (strain W106-1 / CGMCC3.15140) protein is Prenyltransferase iacE.